We begin with the raw amino-acid sequence, 76 residues long: Putative phosphotransferase enzyme IIA component YyzE (76 aa).

A PTS EIIA type-1 domain is found at 1–76 (MVTPTKHAIG…LHQKIFTVVS (76 aa)). Catalysis depends on His-22, which acts as the Tele-phosphohistidine intermediate.

The protein localises to the cytoplasm. Its function is as follows. The phosphoenolpyruvate-dependent sugar phosphotransferase system (PTS), a major carbohydrate active -transport system, catalyzes the phosphorylation of incoming sugar substrates concomitant with their translocation across the cell membrane. This Bacillus subtilis (strain 168) protein is Putative phosphotransferase enzyme IIA component YyzE (yyzE).